We begin with the raw amino-acid sequence, 80 residues long: Exodeoxyribonuclease 7 small subunit (80 aa).

The protein belongs to the XseB family. As to quaternary structure, heterooligomer composed of large and small subunits.

It is found in the cytoplasm. The enzyme catalyses Exonucleolytic cleavage in either 5'- to 3'- or 3'- to 5'-direction to yield nucleoside 5'-phosphates.. Bidirectionally degrades single-stranded DNA into large acid-insoluble oligonucleotides, which are then degraded further into small acid-soluble oligonucleotides. The protein is Exodeoxyribonuclease 7 small subunit of Cronobacter sakazakii (strain ATCC BAA-894) (Enterobacter sakazakii).